The sequence spans 373 residues: Anhydro-N-acetylmuramic acid kinase (373 aa).

An ATP-binding site is contributed by 12–19 (GTSLDGVD).

Belongs to the anhydro-N-acetylmuramic acid kinase family.

It catalyses the reaction 1,6-anhydro-N-acetyl-beta-muramate + ATP + H2O = N-acetyl-D-muramate 6-phosphate + ADP + H(+). Its pathway is amino-sugar metabolism; 1,6-anhydro-N-acetylmuramate degradation. It functions in the pathway cell wall biogenesis; peptidoglycan recycling. Its function is as follows. Catalyzes the specific phosphorylation of 1,6-anhydro-N-acetylmuramic acid (anhMurNAc) with the simultaneous cleavage of the 1,6-anhydro ring, generating MurNAc-6-P. Is required for the utilization of anhMurNAc either imported from the medium or derived from its own cell wall murein, and thus plays a role in cell wall recycling. This is Anhydro-N-acetylmuramic acid kinase from Salmonella newport (strain SL254).